Consider the following 413-residue polypeptide: Putative competence-damage inducible protein (413 aa).

This sequence belongs to the CinA family.

The sequence is that of Putative competence-damage inducible protein from Thermoanaerobacter pseudethanolicus (strain ATCC 33223 / 39E) (Clostridium thermohydrosulfuricum).